The primary structure comprises 248 residues: tRNA (guanine-N(1)-)-methyltransferase (248 aa).

S-adenosyl-L-methionine is bound by residues G117 and 137 to 142 (LGDFVL).

It belongs to the RNA methyltransferase TrmD family. Homodimer.

The protein localises to the cytoplasm. It catalyses the reaction guanosine(37) in tRNA + S-adenosyl-L-methionine = N(1)-methylguanosine(37) in tRNA + S-adenosyl-L-homocysteine + H(+). In terms of biological role, specifically methylates guanosine-37 in various tRNAs. The sequence is that of tRNA (guanine-N(1)-)-methyltransferase from Herminiimonas arsenicoxydans.